Consider the following 85-residue polypeptide: Small ribosomal subunit protein uS17 (85 aa).

The protein belongs to the universal ribosomal protein uS17 family. As to quaternary structure, part of the 30S ribosomal subunit.

Functionally, one of the primary rRNA binding proteins, it binds specifically to the 5'-end of 16S ribosomal RNA. The polypeptide is Small ribosomal subunit protein uS17 (Mesoplasma florum (strain ATCC 33453 / NBRC 100688 / NCTC 11704 / L1) (Acholeplasma florum)).